A 284-amino-acid polypeptide reads, in one-letter code: Shikimate dehydrogenase (NADP(+)) (284 aa).

Shikimate-binding positions include 20-22 (SIS) and Ser67. Lys71 functions as the Proton acceptor in the catalytic mechanism. Position 83 (Asp83) interacts with NADP(+). Shikimate contacts are provided by Asn92 and Asp107. NADP(+) contacts are provided by residues 129-133 (GAGGA) and Ile227. Tyr229 lines the shikimate pocket. Gly250 contacts NADP(+).

The protein belongs to the shikimate dehydrogenase family. Homodimer.

The catalysed reaction is shikimate + NADP(+) = 3-dehydroshikimate + NADPH + H(+). It functions in the pathway metabolic intermediate biosynthesis; chorismate biosynthesis; chorismate from D-erythrose 4-phosphate and phosphoenolpyruvate: step 4/7. Its function is as follows. Involved in the biosynthesis of the chorismate, which leads to the biosynthesis of aromatic amino acids. Catalyzes the reversible NADPH linked reduction of 3-dehydroshikimate (DHSA) to yield shikimate (SA). This is Shikimate dehydrogenase (NADP(+)) from Streptococcus pneumoniae (strain CGSP14).